The following is a 78-amino-acid chain: Sec-independent protein translocase protein TatA (78 aa).

A helical transmembrane segment spans residues 1-21 (MGMPSMPELLIILLIVVLLFG). Residues 46 to 78 (DEEEVATENKKEIEEKTTASTTKTTADQDTTKA) are disordered. Residues 52 to 62 (TENKKEIEEKT) show a composition bias toward basic and acidic residues. Residues 63–78 (TASTTKTTADQDTTKA) are compositionally biased toward low complexity.

It belongs to the TatA/E family. In terms of assembly, the Tat system comprises two distinct complexes: a TatABC complex, containing multiple copies of TatA, TatB and TatC subunits, and a separate TatA complex, containing only TatA subunits. Substrates initially bind to the TatABC complex, which probably triggers association of the separate TatA complex to form the active translocon.

It is found in the cell inner membrane. Part of the twin-arginine translocation (Tat) system that transports large folded proteins containing a characteristic twin-arginine motif in their signal peptide across membranes. TatA could form the protein-conducting channel of the Tat system. The chain is Sec-independent protein translocase protein TatA from Nitratiruptor sp. (strain SB155-2).